Consider the following 244-residue polypeptide: Guanine nucleotide exchange factor rei-1 (244 aa).

2 coiled-coil regions span residues 6-39 (DQLI…KKQF) and 81-144 (VQQA…KAEK). The disordered stretch occupies residues 221-244 (DQIHQERSSQSSLAPSSDAESDSS). The span at 228 to 238 (SSQSSLAPSSD) shows a compositional bias: low complexity.

This sequence belongs to the SH3BP5 family. As to quaternary structure, homodimer, tetramer and multimer. Interacts with rab-11.1. Binds preferentially to the GDP-bound form of rab-11.1. Expressed in germ cells.

The protein localises to the cytoplasmic granule. It is found in the golgi apparatus membrane. Its function is as follows. Guanine nucleotide exchange factor for Rab GTPase Rab-11.1. Spatially and temporally regulates the distribution of Rab-11.1 to target membranes during embryogenesis. Plays a role in cytokinesis, probably by targeting rab-11.1 to the cleavage furrows. This Caenorhabditis elegans protein is Guanine nucleotide exchange factor rei-1.